The following is a 338-amino-acid chain: 6-phosphogluconolactonase (338 aa).

The protein belongs to the cycloisomerase 2 family.

It catalyses the reaction 6-phospho-D-glucono-1,5-lactone + H2O = 6-phospho-D-gluconate + H(+). The protein operates within carbohydrate degradation; pentose phosphate pathway; D-ribulose 5-phosphate from D-glucose 6-phosphate (oxidative stage): step 2/3. Catalyzes the hydrolysis of 6-phosphogluconolactone to 6-phosphogluconate. In Blochmanniella floridana, this protein is 6-phosphogluconolactonase.